We begin with the raw amino-acid sequence, 449 residues long: Methylenetetrahydrofolate--tRNA-(uracil-5-)-methyltransferase TrmFO (449 aa).

9–14 is a binding site for FAD; it reads GGGIAG.

The protein belongs to the MnmG family. TrmFO subfamily. FAD is required as a cofactor.

It is found in the cytoplasm. The catalysed reaction is uridine(54) in tRNA + (6R)-5,10-methylene-5,6,7,8-tetrahydrofolate + NADH + H(+) = 5-methyluridine(54) in tRNA + (6S)-5,6,7,8-tetrahydrofolate + NAD(+). It catalyses the reaction uridine(54) in tRNA + (6R)-5,10-methylene-5,6,7,8-tetrahydrofolate + NADPH + H(+) = 5-methyluridine(54) in tRNA + (6S)-5,6,7,8-tetrahydrofolate + NADP(+). In terms of biological role, catalyzes the folate-dependent formation of 5-methyl-uridine at position 54 (M-5-U54) in all tRNAs. This Gloeobacter violaceus (strain ATCC 29082 / PCC 7421) protein is Methylenetetrahydrofolate--tRNA-(uracil-5-)-methyltransferase TrmFO.